The primary structure comprises 199 residues: Recombination protein RecR (199 aa).

The C4-type zinc-finger motif lies at 57–72; it reads CQSCRTYTEETLCPIC. Residues 81 to 176 form the Toprim domain; sequence STICVVETPA…MISRIAHGVP (96 aa).

Belongs to the RecR family.

Functionally, may play a role in DNA repair. It seems to be involved in an RecBC-independent recombinational process of DNA repair. It may act with RecF and RecO. In Shewanella baltica (strain OS155 / ATCC BAA-1091), this protein is Recombination protein RecR.